Reading from the N-terminus, the 861-residue chain is Leucine--tRNA ligase (861 aa).

The 'HIGH' region motif lies at 42–52 (PYPSGRLHMGH). Residues 619 to 623 (KMSKS) carry the 'KMSKS' region motif. Lys-622 lines the ATP pocket.

Belongs to the class-I aminoacyl-tRNA synthetase family.

The protein localises to the cytoplasm. It carries out the reaction tRNA(Leu) + L-leucine + ATP = L-leucyl-tRNA(Leu) + AMP + diphosphate. This Haemophilus influenzae (strain PittGG) protein is Leucine--tRNA ligase.